We begin with the raw amino-acid sequence, 307 residues long: Ribonuclease Z (307 aa).

Positions 61, 63, 65, 66, 138, 208, and 264 each coordinate Zn(2+). Aspartate 65 (proton acceptor) is an active-site residue.

It belongs to the RNase Z family. Homodimer. Zn(2+) serves as cofactor.

The enzyme catalyses Endonucleolytic cleavage of RNA, removing extra 3' nucleotides from tRNA precursor, generating 3' termini of tRNAs. A 3'-hydroxy group is left at the tRNA terminus and a 5'-phosphoryl group is left at the trailer molecule.. Its function is as follows. Zinc phosphodiesterase, which displays some tRNA 3'-processing endonuclease activity. Probably involved in tRNA maturation, by removing a 3'-trailer from precursor tRNA. This Pyrococcus abyssi (strain GE5 / Orsay) protein is Ribonuclease Z.